Here is a 293-residue protein sequence, read N- to C-terminus: N-acetylneuraminate lyase (293 aa).

Positions 47 and 48 each coordinate aceneuramate. The active-site Proton donor is the Y136. K164 serves as the catalytic Schiff-base intermediate with substrate. Aceneuramate is bound by residues T166, G188, D190, E191, and S207.

The protein belongs to the DapA family. NanA subfamily. In terms of assembly, homotetramer.

Its subcellular location is the cytoplasm. It catalyses the reaction aceneuramate = aldehydo-N-acetyl-D-mannosamine + pyruvate. It participates in amino-sugar metabolism; N-acetylneuraminate degradation; D-fructose 6-phosphate from N-acetylneuraminate: step 1/5. Functionally, catalyzes the reversible aldol cleavage of N-acetylneuraminic acid (sialic acid; Neu5Ac) to form pyruvate and N-acetylmannosamine (ManNAc) via a Schiff base intermediate. In Haemophilus influenzae (strain ATCC 51907 / DSM 11121 / KW20 / Rd), this protein is N-acetylneuraminate lyase.